A 229-amino-acid chain; its full sequence is Large ribosomal subunit protein uL1 (229 aa).

Belongs to the universal ribosomal protein uL1 family. As to quaternary structure, part of the 50S ribosomal subunit.

In terms of biological role, binds directly to 23S rRNA. The L1 stalk is quite mobile in the ribosome, and is involved in E site tRNA release. Its function is as follows. Protein L1 is also a translational repressor protein, it controls the translation of the L11 operon by binding to its mRNA. In Streptococcus thermophilus (strain CNRZ 1066), this protein is Large ribosomal subunit protein uL1.